A 318-amino-acid polypeptide reads, in one-letter code: Aspartate carbamoyltransferase catalytic subunit (318 aa).

Carbamoyl phosphate is bound by residues Arg-58 and Thr-59. Lys-86 serves as a coordination point for L-aspartate. Residues Arg-108, His-141, and Gln-144 each contribute to the carbamoyl phosphate site. L-aspartate contacts are provided by Arg-174 and Arg-226. 2 residues coordinate carbamoyl phosphate: Gly-270 and Pro-271.

Belongs to the aspartate/ornithine carbamoyltransferase superfamily. ATCase family. As to quaternary structure, heterododecamer (2C3:3R2) of six catalytic PyrB chains organized as two trimers (C3), and six regulatory PyrI chains organized as three dimers (R2).

The catalysed reaction is carbamoyl phosphate + L-aspartate = N-carbamoyl-L-aspartate + phosphate + H(+). It functions in the pathway pyrimidine metabolism; UMP biosynthesis via de novo pathway; (S)-dihydroorotate from bicarbonate: step 2/3. Functionally, catalyzes the condensation of carbamoyl phosphate and aspartate to form carbamoyl aspartate and inorganic phosphate, the committed step in the de novo pyrimidine nucleotide biosynthesis pathway. The sequence is that of Aspartate carbamoyltransferase catalytic subunit from Lactobacillus gasseri (strain ATCC 33323 / DSM 20243 / BCRC 14619 / CIP 102991 / JCM 1131 / KCTC 3163 / NCIMB 11718 / NCTC 13722 / AM63).